The chain runs to 357 residues: Phenylalanine--tRNA ligase alpha subunit (357 aa).

A Mg(2+)-binding site is contributed by Glu-257.

It belongs to the class-II aminoacyl-tRNA synthetase family. Phe-tRNA synthetase alpha subunit type 1 subfamily. In terms of assembly, tetramer of two alpha and two beta subunits. Mg(2+) serves as cofactor.

The protein resides in the cytoplasm. It carries out the reaction tRNA(Phe) + L-phenylalanine + ATP = L-phenylalanyl-tRNA(Phe) + AMP + diphosphate + H(+). In Ruegeria sp. (strain TM1040) (Silicibacter sp.), this protein is Phenylalanine--tRNA ligase alpha subunit.